The following is a 132-amino-acid chain: UPF0299 membrane protein YohJ (132 aa).

4 consecutive transmembrane segments (helical) span residues 7 to 27, 31 to 51, 63 to 83, and 93 to 113; these read IIWQYIRAFVLIYACLYAGIF, LLPITIPGSIIGMLILFVLLA, GCYVLIRYMALLFVPIGVGVM, and FGPVVVSCAISTLVVFVVVSW.

Belongs to the UPF0299 family.

The protein resides in the cell inner membrane. The polypeptide is UPF0299 membrane protein YohJ (Salmonella arizonae (strain ATCC BAA-731 / CDC346-86 / RSK2980)).